Reading from the N-terminus, the 1254-residue chain is DNA-directed RNA polymerase subunit beta' (1254 aa).

The Zn(2+) site is built by Cys59, Cys61, Cys76, and Cys79. Residues Asp501, Asp503, and Asp505 each coordinate Mg(2+). Positions 871, 946, 953, and 956 each coordinate Zn(2+).

Belongs to the RNA polymerase beta' chain family. The RNAP catalytic core consists of 2 alpha, 1 beta, 1 beta' and 1 omega subunit. When a sigma factor is associated with the core the holoenzyme is formed, which can initiate transcription. It depends on Mg(2+) as a cofactor. The cofactor is Zn(2+).

It carries out the reaction RNA(n) + a ribonucleoside 5'-triphosphate = RNA(n+1) + diphosphate. Its function is as follows. DNA-dependent RNA polymerase catalyzes the transcription of DNA into RNA using the four ribonucleoside triphosphates as substrates. The protein is DNA-directed RNA polymerase subunit beta' of Mesoplasma florum (strain ATCC 33453 / NBRC 100688 / NCTC 11704 / L1) (Acholeplasma florum).